The sequence spans 154 residues: Endoribonuclease YbeY (154 aa).

Residues His-118, His-122, and His-128 each coordinate Zn(2+).

The protein belongs to the endoribonuclease YbeY family. Requires Zn(2+) as cofactor.

The protein localises to the cytoplasm. Functionally, single strand-specific metallo-endoribonuclease involved in late-stage 70S ribosome quality control and in maturation of the 3' terminus of the 16S rRNA. The protein is Endoribonuclease YbeY of Chloroflexus aurantiacus (strain ATCC 29366 / DSM 635 / J-10-fl).